The primary structure comprises 217 residues: Adenylate kinase (217 aa).

Residue 10-15 (GAGKGT) participates in ATP binding. The tract at residues 30 to 59 (STGDMFRAAMKEGTPLGLQAKQYMDRGDLV) is NMP. AMP contacts are provided by residues T31, R36, 57–59 (DLV), 85–88 (GFPR), and Q92. Residues 126 to 163 (GRRICRNCGATYHLIFHPPAKPGVCDKCGGELYQRADD) form an LID region. R127 serves as a coordination point for ATP. 2 residues coordinate Zn(2+): C130 and C133. An ATP-binding site is contributed by 136 to 137 (TY). Residues C150 and C153 each contribute to the Zn(2+) site. AMP-binding residues include R160 and R171. Q199 serves as a coordination point for ATP.

It belongs to the adenylate kinase family. As to quaternary structure, monomer.

It is found in the cytoplasm. The enzyme catalyses AMP + ATP = 2 ADP. The protein operates within purine metabolism; AMP biosynthesis via salvage pathway; AMP from ADP: step 1/1. Functionally, catalyzes the reversible transfer of the terminal phosphate group between ATP and AMP. Plays an important role in cellular energy homeostasis and in adenine nucleotide metabolism. The chain is Adenylate kinase from Geobacillus stearothermophilus (Bacillus stearothermophilus).